Reading from the N-terminus, the 65-residue chain is ATP synthase F(0) complex subunit 8 (65 aa).

The helical transmembrane segment at 8-24 threads the bilayer; that stretch reads TWLTTILSMFLALFIIF. Position 53 is an N6-acetyllysine; alternate (Lys-53). Lys-53 bears the N6-succinyllysine; alternate mark. N6-acetyllysine is present on Lys-56.

It belongs to the ATPase protein 8 family. In terms of assembly, component of the ATP synthase complex composed at least of ATP5F1A/subunit alpha, ATP5F1B/subunit beta, ATP5MC1/subunit c (homooctomer), MT-ATP6/subunit a, MT-ATP8/subunit 8, ATP5ME/subunit e, ATP5MF/subunit f, ATP5MG/subunit g, ATP5MK/subunit k, ATP5MJ/subunit j, ATP5F1C/subunit gamma, ATP5F1D/subunit delta, ATP5F1E/subunit epsilon, ATP5PF/subunit F6, ATP5PB/subunit b, ATP5PD/subunit d, ATP5PO/subunit OSCP. ATP synthase complex consists of a soluble F(1) head domain (subunits alpha(3) and beta(3)) - the catalytic core - and a membrane F(0) domain - the membrane proton channel (subunits c, a, 8, e, f, g, k and j). These two domains are linked by a central stalk (subunits gamma, delta, and epsilon) rotating inside the F1 region and a stationary peripheral stalk (subunits F6, b, d, and OSCP). Interacts with PRICKLE3.

It localises to the mitochondrion membrane. Its function is as follows. Subunit 8, of the mitochondrial membrane ATP synthase complex (F(1)F(0) ATP synthase or Complex V) that produces ATP from ADP in the presence of a proton gradient across the membrane which is generated by electron transport complexes of the respiratory chain. ATP synthase complex consist of a soluble F(1) head domain - the catalytic core - and a membrane F(1) domain - the membrane proton channel. These two domains are linked by a central stalk rotating inside the F(1) region and a stationary peripheral stalk. During catalysis, ATP synthesis in the catalytic domain of F(1) is coupled via a rotary mechanism of the central stalk subunits to proton translocation. In vivo, can only synthesize ATP although its ATP hydrolase activity can be activated artificially in vitro. Part of the complex F(0) domain. This is ATP synthase F(0) complex subunit 8 from Capra ibex ibex (Alpine ibex).